Consider the following 237-residue polypeptide: Proteasome subunit alpha type-5 (237 aa).

It belongs to the peptidase T1A family. The 26S proteasome consists of a 20S proteasome core and two 19S regulatory subunits. The 20S proteasome core is composed of 28 subunits that are arranged in four stacked rings, resulting in a barrel-shaped structure. The two end rings are each formed by seven alpha subunits, and the two central rings are each formed by seven beta subunits. The catalytic chamber with the active sites is on the inside of the barrel.

The protein resides in the cytoplasm. The protein localises to the nucleus. In terms of biological role, the proteasome is a multicatalytic proteinase complex which is characterized by its ability to cleave peptides with Arg, Phe, Tyr, Leu, and Glu adjacent to the leaving group at neutral or slightly basic pH. The proteasome has an ATP-dependent proteolytic activity. This chain is Proteasome subunit alpha type-5 (PAE1), found in Oryza sativa subsp. japonica (Rice).